The following is a 300-amino-acid chain: Cell adhesion molecule CEACAM19 (300 aa).

The N-terminal stretch at 1–32 (MEIPMGTQGCFSKSLLLSASILVLWMLQGSQA) is a signal peptide. At 33–157 (ALYIQKIPEQ…PSTHLPTNAG (125 aa)) the chain is on the extracellular side. N-linked (GlcNAc...) asparagine glycosylation is present at N104. Residues 158 to 178 (ILAATIIGSLAAGALLISCIA) form a helical membrane-spanning segment. The Cytoplasmic segment spans residues 179 to 300 (YLLVTRNWRG…APYCQLVPTS (122 aa)). Positions 259-291 (SINPARPLPTPPHLQAEPENHQYQQDLLNPDPA) are disordered.

This sequence belongs to the immunoglobulin superfamily. CEA family. Ubiquitous with highest expression in prostate, uterus, fetal brain, mammary gland, adrenal gland, skeletal muscle, small intestine, and kidney, and lower expression in lung, cerebellum, testis, liver, pancreas, bone marrow and ovary.

Its subcellular location is the membrane. The sequence is that of Cell adhesion molecule CEACAM19 from Homo sapiens (Human).